A 93-amino-acid chain; its full sequence is Small ribosomal subunit protein uS19 (93 aa).

Belongs to the universal ribosomal protein uS19 family.

Functionally, protein S19 forms a complex with S13 that binds strongly to the 16S ribosomal RNA. The chain is Small ribosomal subunit protein uS19 from Latilactobacillus sakei subsp. sakei (strain 23K) (Lactobacillus sakei subsp. sakei).